The sequence spans 66 residues: uncharacterized protein (66 aa).

This is an uncharacterized protein from Bacillus subtilis (strain 168).